The chain runs to 430 residues: Aspartate aminotransferase, mitochondrial (430 aa).

The N-terminal 28 residues, 1 to 28, are a transit peptide targeting the mitochondrion; that stretch reads MALAMMIRNAASKRGMTPISGHFGGLRS. The L-aspartate site is built by glycine 65, tryptophan 160, and asparagine 213. Lysine 277 is modified (N6-(pyridoxal phosphate)lysine). Position 405 (arginine 405) interacts with L-aspartate.

The protein belongs to the class-I pyridoxal-phosphate-dependent aminotransferase family. Homodimer. It depends on pyridoxal 5'-phosphate as a cofactor.

The protein localises to the mitochondrion matrix. The catalysed reaction is L-aspartate + 2-oxoglutarate = oxaloacetate + L-glutamate. Its function is as follows. Amino acid aminotransferase important for the metabolism of amino acids and Krebs-cycle related organic acids. No activity with D-Asp or D-Ala as amino donors. In plants, it is involved in nitrogen metabolism and in aspects of carbon and energy metabolism. The sequence is that of Aspartate aminotransferase, mitochondrial (ASP1) from Arabidopsis thaliana (Mouse-ear cress).